Here is a 547-residue protein sequence, read N- to C-terminus: Alpha-1,3-mannosyl-glycoprotein 4-beta-N-acetylglucosaminyltransferase B (547 aa).

The Cytoplasmic portion of the chain corresponds to 1 to 7; it reads MRLRNGT. The helical; Signal-anchor for type II membrane protein transmembrane segment at 8–28 threads the bilayer; that stretch reads FLTVLLFGLCGLISLSWYTAF. Residues 29 to 547 are Lumenal-facing; sequence SNSKGNVVDI…LSEIFIKKAE (519 aa). Residues 36 to 83 adopt a coiled-coil conformation; the sequence is VDIYQREFLALRDRLHSAEQENLKRSKELNLVLDEIKRAIAEKQALRD. N85, N101, and N464 each carry an N-linked (GlcNAc...) asparagine glycan.

Belongs to the glycosyltransferase 54 family. It depends on a divalent metal cation as a cofactor. N-glycosylated.

The protein resides in the golgi apparatus membrane. The catalysed reaction is N(4)-{beta-D-GlcNAc-(1-&gt;2)-alpha-D-Man-(1-&gt;3)-[beta-D-GlcNAc-(1-&gt;2)-alpha-D-Man-(1-&gt;6)]-beta-D-Man-(1-&gt;4)-beta-D-GlcNAc-(1-&gt;4)-beta-D-GlcNAc}-L-asparaginyl-[protein] + UDP-N-acetyl-alpha-D-glucosamine = N(4)-{beta-D-GlcNAc-(1-&gt;2)-[beta-D-GlcNAc-(1-&gt;4)]-alpha-D-Man-(1-&gt;3)-[beta-D-GlcNAc-(1-&gt;2)-alpha-D-Man-(1-&gt;6)]-beta-D-Man-(1-&gt;4)-beta-D-GlcNAc-(1-&gt;4)-beta-D-GlcNAc}-L-asparaginyl-[protein] + UDP + H(+). The enzyme catalyses an N(4)-{beta-D-GlcNAc-(1-&gt;2)-alpha-D-Man-(1-&gt;3)-[alpha-D-Man-(1-&gt;6)]-beta-D-Man-(1-&gt;4)-beta-D-GlcNAc-(1-&gt;4)-beta-D-GlcNAc}-L-asparaginyl-[protein] + UDP-N-acetyl-alpha-D-glucosamine = an N(4)-{beta-D-GlcNAc-(1-&gt;2)-[beta-D-GlcNAc-(1-&gt;4)]-alpha-D-Man-(1-&gt;3)-[alpha-D-Man-(1-&gt;6)]-beta-D-Man-(1-&gt;4)-beta-D-GlcNAc-(1-&gt;4)-beta-D-GlcNAc}-L-asparaginyl-[protein] + UDP + H(+). It catalyses the reaction an N(4)-{beta-D-GlcNAc-(1-&gt;2)-alpha-D-Man-(1-&gt;3)-[beta-D-GlcNAc-(1-&gt;2)-[beta-D-GlcNAc-(1-&gt;6)]-alpha-D-Man-(1-&gt;6)]-beta-D-Man-(1-&gt;4)-beta-D-GlcNAc-(1-&gt;4)-beta-D-GlcNAc}-L-asparaginyl-[protein] + UDP-N-acetyl-alpha-D-glucosamine = an N(4)-{beta-D-GlcNAc-(1-&gt;2)-[beta-D-GlcNAc-(1-&gt;4)]-alpha-D-Man-(1-&gt;3)-[beta-D-GlcNAc-(1-&gt;2)-[beta-D-GlcNAc-(1-&gt;6)]-alpha-D-Man-(1-&gt;6)]-beta-D-Man-(1-&gt;4)-beta-D-GlcNAc-(1-&gt;4)-beta-D-GlcNAc}-L-asparaginyl-[protein] + UDP + H(+). It carries out the reaction an N(4)-{beta-D-GlcNAc-(1-&gt;2)-alpha-D-Man-(1-&gt;3)-[beta-D-GlcNAc-(1-&gt;2)-alpha-D-Man-(1-&gt;6)]-beta-D-Man-(1-&gt;4)-beta-D-GlcNAc-(1-&gt;4)-[alpha-L-Fuc-(1-&gt;6)]-beta-D-GlcNAc}-L-asparaginyl-[protein] + UDP-N-acetyl-alpha-D-glucosamine = N(4)-{beta-D-GlcNAc-(1-&gt;2)-[beta-D-GlcNAc-(1-&gt;4)]-alpha-D-Man-(1-&gt;3)-[beta-D-GlcNAc-(1-&gt;2)-alpha-D-Man-(1-&gt;6)]-beta-D-Man-(1-&gt;4)-beta-D-GlcNAc-(1-&gt;4)-[alpha-L-Fuc-(1-&gt;6)]-beta-D-GlcNAc}-asparaginyl-[protein] + UDP + H(+). The catalysed reaction is an N(4)-{beta-D-GlcNAc-(1-&gt;2)-alpha-D-Man-(1-&gt;3)-[beta-D-Gal-(1-&gt;4)-beta-D-GlcNAc-(1-&gt;2)-alpha-D-Man-(1-&gt;6)]-beta-D-Man-(1-&gt;4)-beta-D-GlcNAc-(1-&gt;4)-beta-D-GlcNAc}-L-asparaginyl-[protein] + UDP-N-acetyl-alpha-D-glucosamine = an N(4)-{beta-D-GlcNAc-(1-&gt;2)-[beta-D-GlcNAc-(1-&gt;4)]-alpha-D-Man-(1-&gt;3)-[beta-D-Gal-(1-&gt;4)-beta-D-GlcNAc-(1-&gt;2)-alpha-D-Man-(1-&gt;6)]-beta-D-Man-(1-&gt;4)-beta-D-GlcNAc-(1-&gt;4)-beta-D-GlcNAc}-L-asparaginyl-[protein] + UDP + H(+). The enzyme catalyses N(4)-{beta-D-GlcNAc-(1-&gt;2)-alpha-D-Man-(1-&gt;3)-[alpha-D-Man-(1-&gt;3)-{alpha-D-Man-(1-&gt;6)}-alpha-D-Man-(1-&gt;6)]-beta-D-Man-(1-&gt;4)-beta-D-GlcNAc-(1-&gt;4)-beta-D-GlcNAc}-asparaginyl-[protein] + UDP-N-acetyl-alpha-D-glucosamine = N(4)-{beta-D-GlcNAc-(1-&gt;2)-[beta-D-GlcNAc-(1-&gt;4)]-alpha-D-Man-(1-&gt;3)-[alpha-D-Man-(1-&gt;3)-{alpha-D-Man-(1-&gt;6)}-alpha-D-Man-(1-&gt;6)]-beta-D-Man-(1-&gt;4)-beta-D-GlcNAc-(1-&gt;4)-beta-D-GlcNAc}-asparaginyl-[protein] + UDP + H(+). It catalyses the reaction N(4)-{beta-D-GlcNAc-(1-&gt;2)-alpha-D-Man-(1-&gt;3)-beta-D-Man-(1-&gt;4)-beta-D-GlcNAc-(1-&gt;4)-beta-D-GlcNAc}-asparaginyl-[protein] + UDP-N-acetyl-alpha-D-glucosamine = N(4)-{beta-D-GlcNAc-(1-&gt;2)-[beta-D-GlcNAc-(1-&gt;4)]-alpha-D-Man-(1-&gt;3)-beta-D-Man-(1-&gt;4)-beta-D-GlcNAc-(1-&gt;4)-beta-D-GlcNAc}-asparaginyl-[protein] + UDP + H(+). The protein operates within protein modification; protein glycosylation. Functionally, glycosyltransferase that catalyze the transfer of GlcNAc from UDP-GlcNAc to the GlcNAcbeta1-2Manalpha1-3 arm of the core structure of N-linked glycans through a beta1-4 linkage and participates in the production of tri- and tetra-antennary N-linked sugar chains. Prefers complex-type N-glycans over hybrid-types. Has lower affinities for donors or acceptors than MGAT4A, suggesting that, under physiological conditions, it is not the main contributor in N-glycan biosynthesis. This chain is Alpha-1,3-mannosyl-glycoprotein 4-beta-N-acetylglucosaminyltransferase B (mgat4bQ9UQ53), found in Danio rerio (Zebrafish).